Consider the following 372-residue polypeptide: Carbamoyl phosphate synthase small chain (372 aa).

The interval 1–184 (MKAYIYLEND…SFQKFNDAKR (184 aa)) is CPSase. L-glutamine contacts are provided by Ser45, Gly240, and Gly242. The Glutamine amidotransferase type-1 domain maps to 188–372 (KVAVIDYGVK…YIFKEFMNLM (185 aa)). Cys268 acts as the Nucleophile in catalysis. Positions 269, 272, 310, and 313 each coordinate L-glutamine. Active-site residues include His351 and Glu353.

It belongs to the CarA family. In terms of assembly, composed of two chains; the small (or glutamine) chain promotes the hydrolysis of glutamine to ammonia, which is used by the large (or ammonia) chain to synthesize carbamoyl phosphate. Tetramer of heterodimers (alpha,beta)4.

The catalysed reaction is hydrogencarbonate + L-glutamine + 2 ATP + H2O = carbamoyl phosphate + L-glutamate + 2 ADP + phosphate + 2 H(+). The enzyme catalyses L-glutamine + H2O = L-glutamate + NH4(+). It participates in amino-acid biosynthesis; L-arginine biosynthesis; carbamoyl phosphate from bicarbonate: step 1/1. The protein operates within pyrimidine metabolism; UMP biosynthesis via de novo pathway; (S)-dihydroorotate from bicarbonate: step 1/3. Functionally, small subunit of the glutamine-dependent carbamoyl phosphate synthetase (CPSase). CPSase catalyzes the formation of carbamoyl phosphate from the ammonia moiety of glutamine, carbonate, and phosphate donated by ATP, constituting the first step of 2 biosynthetic pathways, one leading to arginine and/or urea and the other to pyrimidine nucleotides. The small subunit (glutamine amidotransferase) binds and cleaves glutamine to supply the large subunit with the substrate ammonia. The protein is Carbamoyl phosphate synthase small chain of Campylobacter jejuni subsp. jejuni serotype O:2 (strain ATCC 700819 / NCTC 11168).